A 539-amino-acid chain; its full sequence is MKENFIAALGMTVSASAKQHQVVDNPPVDIILIGGGVMSATLGTYLKALEPGWTIHMYERLEKTAEESSNGWNNAGTGHAAFCELNYTTLSPAGSVDISKAVAVNESFEISRQFWAYLVKQKILTNPQSFINNVPHMSFVWGEDNIRFLRQRFDALQTSTLFRGMEYSENPQQIREWAPLVMDGRDTFQKVAATRMAMGTDVNFGEMTQQLLAALQQYPQFHLHLQHDVVDIKRNADQTWSVRVADHSNGGRQSTVCARHVFIGGGGASLTLLQKSGIPEVNGYAGFPVGGQFLVATNPEVVGHHHAKVYGKASVGAPPMSVPHIDTRILDGKQALLFGPFATFSSKFLKRGSWLDLFHSLTRQNLLPMLRVGLDNFGLMRYLIGQLLMSDKDRLNALREYYPQATMADWSLIEAGQRVQVIKKDAGKGGILQFGTEVVSSADGSLSVLLGASPGASTAAPIMLELLASMFKEQVTTDAWQRKLKEMVPSYGQTINGNLALTNEIRLSTSEVLGLTYIEAKPLPGEPADGKWEGLQKAM.

This sequence belongs to the MQO family. It depends on FAD as a cofactor.

It carries out the reaction (S)-malate + a quinone = a quinol + oxaloacetate. It participates in carbohydrate metabolism; tricarboxylic acid cycle; oxaloacetate from (S)-malate (quinone route): step 1/1. In Sodalis glossinidius (strain morsitans), this protein is Probable malate:quinone oxidoreductase.